The primary structure comprises 162 residues: MRRITHFFGSLFLVELLRGMMLTGRHLFARKVTVQFPEEKTPQSPRFRGLHALRRYPNGEERCIACKLCEAVCPALAITIDSEQRADGTRRTTRYDIDLTKCIFCGFCEESCPVDSIVETRILEYHGEQRGDLIYTKPMLLAIGDKYEAQIAQDRAQDAKYR.

4Fe-4S ferredoxin-type domains follow at residues 53–83 (LRRY…IDSE) and 93–122 (TRYD…ETRI). 8 residues coordinate [4Fe-4S] cluster: C63, C66, C69, C73, C102, C105, C108, and C112.

It belongs to the complex I 23 kDa subunit family. In terms of assembly, NDH-1 is composed of 14 different subunits. Subunits NuoA, H, J, K, L, M, N constitute the membrane sector of the complex. Requires [4Fe-4S] cluster as cofactor.

Its subcellular location is the cell inner membrane. It carries out the reaction a quinone + NADH + 5 H(+)(in) = a quinol + NAD(+) + 4 H(+)(out). NDH-1 shuttles electrons from NADH, via FMN and iron-sulfur (Fe-S) centers, to quinones in the respiratory chain. The immediate electron acceptor for the enzyme in this species is believed to be ubiquinone. Couples the redox reaction to proton translocation (for every two electrons transferred, four hydrogen ions are translocated across the cytoplasmic membrane), and thus conserves the redox energy in a proton gradient. The polypeptide is NADH-quinone oxidoreductase subunit I (Thiobacillus denitrificans (strain ATCC 25259 / T1)).